The primary structure comprises 263 residues: Indole-3-glycerol phosphate synthase (263 aa).

This sequence belongs to the TrpC family.

The enzyme catalyses 1-(2-carboxyphenylamino)-1-deoxy-D-ribulose 5-phosphate + H(+) = (1S,2R)-1-C-(indol-3-yl)glycerol 3-phosphate + CO2 + H2O. Its pathway is amino-acid biosynthesis; L-tryptophan biosynthesis; L-tryptophan from chorismate: step 4/5. In Acidithiobacillus ferrooxidans (strain ATCC 23270 / DSM 14882 / CIP 104768 / NCIMB 8455) (Ferrobacillus ferrooxidans (strain ATCC 23270)), this protein is Indole-3-glycerol phosphate synthase.